The following is a 464-amino-acid chain: Argininosuccinate lyase (464 aa).

It belongs to the lyase 1 family. Argininosuccinate lyase subfamily.

The protein resides in the cytoplasm. It carries out the reaction 2-(N(omega)-L-arginino)succinate = fumarate + L-arginine. The protein operates within amino-acid biosynthesis; L-arginine biosynthesis; L-arginine from L-ornithine and carbamoyl phosphate: step 3/3. The chain is Argininosuccinate lyase from Janthinobacterium sp. (strain Marseille) (Minibacterium massiliensis).